A 321-amino-acid chain; its full sequence is Lipoyl synthase (321 aa).

[4Fe-4S] cluster is bound by residues cysteine 68, cysteine 73, cysteine 79, cysteine 94, cysteine 98, cysteine 101, and serine 308. The 218-residue stretch at 80-297 folds into the Radical SAM core domain; sequence FNHGTATFMI…KEIALELGFT (218 aa).

It belongs to the radical SAM superfamily. Lipoyl synthase family. [4Fe-4S] cluster serves as cofactor.

Its subcellular location is the cytoplasm. The catalysed reaction is [[Fe-S] cluster scaffold protein carrying a second [4Fe-4S](2+) cluster] + N(6)-octanoyl-L-lysyl-[protein] + 2 oxidized [2Fe-2S]-[ferredoxin] + 2 S-adenosyl-L-methionine + 4 H(+) = [[Fe-S] cluster scaffold protein] + N(6)-[(R)-dihydrolipoyl]-L-lysyl-[protein] + 4 Fe(3+) + 2 hydrogen sulfide + 2 5'-deoxyadenosine + 2 L-methionine + 2 reduced [2Fe-2S]-[ferredoxin]. It functions in the pathway protein modification; protein lipoylation via endogenous pathway; protein N(6)-(lipoyl)lysine from octanoyl-[acyl-carrier-protein]: step 2/2. In terms of biological role, catalyzes the radical-mediated insertion of two sulfur atoms into the C-6 and C-8 positions of the octanoyl moiety bound to the lipoyl domains of lipoate-dependent enzymes, thereby converting the octanoylated domains into lipoylated derivatives. The sequence is that of Lipoyl synthase from Aliivibrio fischeri (strain MJ11) (Vibrio fischeri).